We begin with the raw amino-acid sequence, 456 residues long: Bifunctional protein GlmU (456 aa).

A pyrophosphorylase region spans residues 1 to 231 (MERTCLAIIL…EEELTGCNTR (231 aa)). UDP-N-acetyl-alpha-D-glucosamine-binding positions include 10–13 (LAAG), lysine 24, glutamine 77, and 82–83 (GT). Aspartate 107 is a binding site for Mg(2+). Positions 143, 157, 172, and 229 each coordinate UDP-N-acetyl-alpha-D-glucosamine. Mg(2+) is bound at residue asparagine 229. The interval 232–252 (AELAYIERLWQQRRRHELMLA) is linker. The segment at 253-456 (GVSMVAPETV…LARKIAKAAE (204 aa)) is N-acetyltransferase. UDP-N-acetyl-alpha-D-glucosamine is bound by residues arginine 318 and lysine 336. Histidine 348 functions as the Proton acceptor in the catalytic mechanism. Residues tyrosine 351 and asparagine 362 each coordinate UDP-N-acetyl-alpha-D-glucosamine. Residues alanine 365, 371–372 (NY), serine 390, serine 408, and arginine 425 each bind acetyl-CoA.

The protein in the N-terminal section; belongs to the N-acetylglucosamine-1-phosphate uridyltransferase family. It in the C-terminal section; belongs to the transferase hexapeptide repeat family. Homotrimer. Requires Mg(2+) as cofactor.

It is found in the cytoplasm. The catalysed reaction is alpha-D-glucosamine 1-phosphate + acetyl-CoA = N-acetyl-alpha-D-glucosamine 1-phosphate + CoA + H(+). It catalyses the reaction N-acetyl-alpha-D-glucosamine 1-phosphate + UTP + H(+) = UDP-N-acetyl-alpha-D-glucosamine + diphosphate. Its pathway is nucleotide-sugar biosynthesis; UDP-N-acetyl-alpha-D-glucosamine biosynthesis; N-acetyl-alpha-D-glucosamine 1-phosphate from alpha-D-glucosamine 6-phosphate (route II): step 2/2. It functions in the pathway nucleotide-sugar biosynthesis; UDP-N-acetyl-alpha-D-glucosamine biosynthesis; UDP-N-acetyl-alpha-D-glucosamine from N-acetyl-alpha-D-glucosamine 1-phosphate: step 1/1. The protein operates within bacterial outer membrane biogenesis; LPS lipid A biosynthesis. Its function is as follows. Catalyzes the last two sequential reactions in the de novo biosynthetic pathway for UDP-N-acetylglucosamine (UDP-GlcNAc). The C-terminal domain catalyzes the transfer of acetyl group from acetyl coenzyme A to glucosamine-1-phosphate (GlcN-1-P) to produce N-acetylglucosamine-1-phosphate (GlcNAc-1-P), which is converted into UDP-GlcNAc by the transfer of uridine 5-monophosphate (from uridine 5-triphosphate), a reaction catalyzed by the N-terminal domain. This is Bifunctional protein GlmU from Sinorhizobium medicae (strain WSM419) (Ensifer medicae).